The primary structure comprises 240 residues: Protein OPG176 (240 aa).

It belongs to the orthopoxvirus OPG176 family. Tetramer. Interacts with host MYD88, TRF4, TICAM2 and MAL.

Functionally, BCL2-like protein which disrupts the host immune response by inhibiting the TLR4 signaling pathway leading to NF-kappa-B activation. Acts close to the plasma membrane and targets several host TIR-domain containing adapter proteins including MYD88, TIRAP, TRIF and TICAM2. In turn, blocks the host NF-kappa-B and TRIF-mediated IRF3 activation. This Bos taurus (Bovine) protein is Protein OPG176 (OPG176).